Reading from the N-terminus, the 297-residue chain is PDZ domain-containing protein GIPC3 (297 aa).

In terms of domain architecture, PDZ spans 97 to 177; that stretch reads EVEVTKTEDA…SQPFTLRLVQ (81 aa).

The protein belongs to the GIPC family. As to expression, expressed in adult lung, brain and testis. In the inner ear, it is expressed in the inner and outer hair cells of the organ of Corti. Also expressed in cochlear spiral ganglion neurons.

In terms of biological role, required for postnatal maturation of the hair bundle and long-term survival of hair cells and spiral ganglion. The protein is PDZ domain-containing protein GIPC3 (Gipc3) of Mus musculus (Mouse).